Consider the following 335-residue polypeptide: Nucleoid-associated protein YejK (335 aa).

The protein belongs to the YejK family.

It localises to the cytoplasm. Its subcellular location is the nucleoid. The chain is Nucleoid-associated protein YejK from Salmonella arizonae (strain ATCC BAA-731 / CDC346-86 / RSK2980).